We begin with the raw amino-acid sequence, 504 residues long: Transcriptional coactivator YAP1 (504 aa).

Pro residues-rich tracts occupy residues 1–12 (MDPGQQPPPQPA) and 20–36 (PSQP…PGQP). Residues 1–59 (MDPGQQPPPQPAPQGQGQPPSQPPQGQGPPSGPGQPAPAATQAAPQAPPAGHQIVHVRG) are disordered. The span at 37 to 51 (APAATQAAPQAPPAG) shows a compositional bias: low complexity. Ser61 carries the phosphoserine; by LATS1 and LATS2 modification. The residue at position 63 (Thr63) is a Phosphothreonine. Residues 86–100 (MRLRKLPDSFFKPPE) adopt a coiled-coil conformation. An N6-lactoyllysine modification is found at Lys90. The segment at 91-114 (LPDSFFKPPEPKSHSRQASTDAGT) is disordered. Ser105 is subject to Phosphoserine. Phosphoserine; by LATS1 and LATS2 is present on Ser109. Phosphothreonine is present on Thr110. Thr119 carries the phosphothreonine; by MAPK8 and MAPK9 modification. Ser127 is subject to Phosphoserine; by LATS1 and LATS2. Phosphoserine is present on residues Ser128 and Ser131. The tract at residues 133 to 158 (QLGAVSPGTLTPTGVVSGPAATPTAQ) is disordered. Ser138 is modified (phosphoserine; by MAPK8 and MAPK9). Residue Thr154 is modified to Phosphothreonine; by MAPK8 and MAPK9. The residue at position 164 (Ser164) is a Phosphoserine; by LATS1 and LATS2. WW domains are found at residues 171-204 (VPLP…DPRK) and 230-263 (GPLP…DPRL). Residues Ser274 and Ser289 each carry the phosphoserine modification. Disordered regions lie at residues 275 to 309 (QSAP…MRLQ) and 355 to 407 (LEQD…MSSY). Positions 291–504 (QGGVMGGSNS…LDKESFLTWL (214 aa)) are transactivation domain. The stretch at 298 to 359 (SNSNQQQQMR…SQLPTLEQDG (62 aa)) forms a coiled coil. The segment covering 355 to 391 (LEQDGGTQNPVSSPGMSQELRTMTTNSSDPFLNSGTY) has biased composition (polar residues). The residue at position 367 (Ser367) is a Phosphoserine; by MAPK8 and MAPK9. A phosphoserine mark is found at Ser371, Ser381, Ser382, and Ser388. Ser397 bears the Phosphoserine; by LATS1 and LATS2 mark. Residues Ser400 and Ser403 each carry the phosphoserine; by CK1 modification. Tyr407 carries the phosphotyrosine; by ABL1 modification. At Thr412 the chain carries Phosphothreonine; by MAPK8 and MAPK9.

It belongs to the YAP1 family. In terms of assembly, part of a complex when phosphorylated that contains DSG3, PKP1, YAP1 and YWHAG; the complex is required for localization of DSG3 and YAP1 to the cell membrane in keratinocytes. Binds to the SH3 domain of the YES kinase. Binds to WBP1 and WBP2. Binds, in vitro, through the WW1 domain, to neural isoforms of ENAH that contain the PPSY motif. The phosphorylated form interacts with YWHAB. Interacts (via WW domains) with LATS1 (via PPxY motif 2). Interacts with LATS2. Interacts with TEAD1, TEAD2, TEAD3 and TEAD4. Interacts with TP73. Interacts with RUNX1. Interacts with HCK. Interacts (via WW domains) with PTPN14 (via PPxY motif 2); this interaction leads to the cytoplasmic sequestration of YAP1 and inhibits its transcriptional coactivator activity. Interacts (when phosphorylated at Ser-127) with SMAD2, SMAD3 and WWTR1. Interacts with PRRG2 (via cytoplasmic domain). Interacts (via WW domains) with PRRG4 (via cytoplasmic domain). Interacts (phosphorylated) with CLDN18; the interaction sequesters YAP1 away from the nucleus and thereby restricts transcription of YAP1 target genes. Interacts with SMAD1. Interacts with AMOTL2, the interaction is required for ubiquitination of AMOTL2 and localization of YAP1 to tight junctions. Interacts with AMOT isoform 1; the interaction facilitates translocation of YAP1 to the cytoplasm and tight junctions. As to quaternary structure, interacts (via WW domain 1) with isoform 3 of ERBB4 (via PPxY motif 2). In terms of processing, phosphorylated by LATS1 and LATS2; leading to cytoplasmic translocation and inactivation. Phosphorylated by ABL1; leading to YAP1 stabilization, enhanced interaction with TP73 and recruitment onto proapoptotic genes; in response to DNA damage. Phosphorylation at Ser-400 and Ser-403 by CK1 is triggered by previous phosphorylation at Ser-397 by LATS proteins and leads to YAP1 ubiquitination by SCF(beta-TRCP) E3 ubiquitin ligase and subsequent degradation. Phosphorylated at Thr-119, Ser-138, Thr-154, Ser-367 and Thr-412 by MAPK8/JNK1 and MAPK9/JNK2, which is required for the regulation of apoptosis by YAP1. Phosphorylated in the nucleus by PRP4K; phosphorylation leads to nuclear exclusion. Post-translationally, lactylation by AARS1 promotes nuclear localization and stabilization of YAP1, leading to increased Hippo signaling pathway. Delactylated by SIRT1. Ubiquitinated by SCF(beta-TRCP) E3 ubiquitin ligase. As to expression, increased expression seen in some liver and prostate cancers. Isoforms lacking the transactivation domain found in striatal neurons of patients with Huntington disease (at protein level).

Its subcellular location is the cytoplasm. It is found in the nucleus. The protein resides in the cell junction. It localises to the tight junction. The protein localises to the cell membrane. In terms of biological role, transcriptional regulator with dual roles as a coactivator and corepressor. Critical downstream regulatory target in the Hippo signaling pathway, crucial for organ size control and tumor suppression by restricting proliferation and promoting apoptosis. The Hippo signaling pathway core involves a kinase cascade featuring STK3/MST2 and STK4/MST1, along with its regulatory partner SAV1, which phosphorylates and activates LATS1/2 in complex with their regulatory protein, MOB1. This activation leads to the phosphorylation and inactivation of the YAP1 oncoprotein and WWTR1/TAZ. Phosphorylation of YAP1 by LATS1/2 prevents its nuclear translocation, thereby regulating the expression of its target genes. The transcriptional regulation of gene expression requires TEAD transcription factors and modulates cell growth, anchorage-independent growth, and induction of epithelial-mesenchymal transition (EMT). Plays a key role in tissue tension and 3D tissue shape by regulating the cortical actomyosin network, acting via ARHGAP18, a Rho GTPase activating protein that suppresses F-actin polymerization. It also suppresses ciliogenesis by acting as a transcriptional corepressor of TEAD4 target genes AURKA and PLK1. In conjunction with WWTR1, regulates TGFB1-dependent SMAD2 and SMAD3 nuclear accumulation. Synergizes with WBP2 to enhance PGR activity. Activates the C-terminal fragment (CTF) of ERBB4 (isoform 3). This chain is Transcriptional coactivator YAP1, found in Homo sapiens (Human).